Here is a 300-residue protein sequence, read N- to C-terminus: Mitochondrial GTP/GDP carrier protein 1 (300 aa).

3 Solcar repeats span residues 8-108 (QSGL…KKDF), 117-198 (GKAM…AKEY), and 208-293 (ATWS…LIPR). Transmembrane regions (helical) follow at residues 14–34 (LLGSASAGIMEIAVFHPVDTI), 85–101 (QRVYKYGGQPFANEFLN), 122–142 (SAAAGSLIGIGEIVLLPLDVL), 173–189 (GWGWTAARNAPGSFALF), 214–234 (FISSIVGACSSLIVSAPLDVI), and 268–285 (GLTPKLLTTGPKLVFSFA).

Belongs to the mitochondrial carrier (TC 2.A.29) family.

It localises to the mitochondrion inner membrane. Functionally, mitochondrial GTP/GDP transporter required for GTP uptake and GDP exit from mitochondria. Involved in mitochondrial iron transport and essential for mitochondrial genome maintenance. The polypeptide is Mitochondrial GTP/GDP carrier protein 1 (GGC1) (Saccharomyces cerevisiae (strain ATCC 204508 / S288c) (Baker's yeast)).